The sequence spans 133 residues: Peptide methionine sulfoxide reductase MsrB (133 aa).

The 123-residue stretch at 8–130 folds into the MsrB domain; the sequence is LDVWRELLSD…NSASLRLKPR (123 aa). Zn(2+) contacts are provided by cysteine 47, cysteine 50, cysteine 96, and cysteine 99. Cysteine 119 serves as the catalytic Nucleophile.

The protein belongs to the MsrB Met sulfoxide reductase family. Requires Zn(2+) as cofactor.

It carries out the reaction L-methionyl-[protein] + [thioredoxin]-disulfide + H2O = L-methionyl-(R)-S-oxide-[protein] + [thioredoxin]-dithiol. This Azotobacter vinelandii (strain DJ / ATCC BAA-1303) protein is Peptide methionine sulfoxide reductase MsrB.